The chain runs to 317 residues: Ribosomal RNA small subunit methyltransferase H (317 aa).

S-adenosyl-L-methionine is bound by residues 30 to 32 (GGH), Asp-50, Tyr-78, Asp-95, and Gln-102.

It belongs to the methyltransferase superfamily. RsmH family.

Its subcellular location is the cytoplasm. The enzyme catalyses cytidine(1402) in 16S rRNA + S-adenosyl-L-methionine = N(4)-methylcytidine(1402) in 16S rRNA + S-adenosyl-L-homocysteine + H(+). Specifically methylates the N4 position of cytidine in position 1402 (C1402) of 16S rRNA. In Nitrosomonas eutropha (strain DSM 101675 / C91 / Nm57), this protein is Ribosomal RNA small subunit methyltransferase H.